The primary structure comprises 831 residues: Replication restart protein PriA (831 aa).

A Helicase ATP-binding domain is found at 304–471 (VLPLQGYHQV…HRHQNDPQRH (168 aa)). 317–324 (GVTGSGKT) serves as a coordination point for ATP. The short motif at 413 to 416 (DEEH) is the DEAH box element. Positions 537, 540, 546, 549, 568, 571, 581, and 584 each coordinate Zn(2+). In terms of domain architecture, Helicase C-terminal spans 575 to 735 (EIQPKVCPEC…ELPQREMLNY (161 aa)).

This sequence belongs to the helicase family. PriA subfamily. Component of the replication restart primosome. Zn(2+) is required as a cofactor.

It catalyses the reaction Couples ATP hydrolysis with the unwinding of duplex DNA by translocating in the 3'-5' direction.. The catalysed reaction is ATP + H2O = ADP + phosphate + H(+). In terms of biological role, initiates the restart of stalled replication forks, which reloads the replicative helicase on sites other than the origin of replication. Recognizes and binds to abandoned replication forks and remodels them to uncover a helicase loading site. Promotes assembly of the primosome at these replication forks. This is Replication restart protein PriA from Synechocystis sp. (strain ATCC 27184 / PCC 6803 / Kazusa).